The sequence spans 642 residues: Mini-chromosome maintenance complex-binding protein (642 aa).

The span at 151-161 (ARVSPSTSYTP) shows a compositional bias: polar residues. Residues 151–188 (ARVSPSTSYTPSRHKRSYEDDEDMDLQPNKQKDQHMGA) form a disordered region. Ser-154 bears the Phosphoserine mark. Position 160 is a phosphothreonine (Thr-160). A phosphoserine mark is found at Ser-167 and Ser-298.

Belongs to the MCMBP family. As to quaternary structure, interacts with the MCM complex: associates with the MCM3-7 complex which lacks MCM2, while it does not interact with the MCM complex when MCM2 is present (MCM2-7 complex). Interacts with the RPA complex, when composed of all RPA1, RPA2 and RPA3 components, but not with RPA1 or RPA2 alone.

It localises to the nucleus. Functionally, associated component of the MCM complex that acts as a regulator of DNA replication. Binds to the MCM complex during late S phase and promotes the disassembly of the MCM complex from chromatin, thereby acting as a key regulator of pre-replication complex (pre-RC) unloading from replicated DNA. Can dissociate the MCM complex without addition of ATP; probably acts by destabilizing interactions of each individual subunits of the MCM complex. Required for sister chromatid cohesion. This chain is Mini-chromosome maintenance complex-binding protein (MCMBP), found in Bos taurus (Bovine).